Here is a 460-residue protein sequence, read N- to C-terminus: Tyrosine phenol-lyase (460 aa).

Lysine 260 bears the N6-(pyridoxal phosphate)lysine mark.

This sequence belongs to the beta-eliminating lyase family. Homotetramer. It depends on pyridoxal 5'-phosphate as a cofactor.

It carries out the reaction L-tyrosine + H2O = phenol + pyruvate + NH4(+). This chain is Tyrosine phenol-lyase, found in Clostridium tetani (strain Massachusetts / E88).